The primary structure comprises 270 residues: Centromere protein Q (270 aa).

Positions 1-59 (MSGKANTSKKKSQRVKRNVKQRADKEDEELDSPENKVGNRAKRNRSHAGHLSSKEQTKC) are disordered. Composition is skewed to basic residues over residues 7-20 (TSKK…RNVK) and 39-48 (NRAKRNRSHA). Ser-52 is subject to Phosphoserine. Residues 143–205 (LKVEREQERA…EEEMKEVFHI (63 aa)) are a coiled coil.

It belongs to the CENP-Q/OKP1 family. In terms of assembly, component of the CENPA-CAD complex, composed of CENPI, CENPK, CENPL, CENPO, CENPP, CENPQ, CENPR and CENPS. The CENPA-CAD complex interacts with the CENPA-NAC complex, at least composed of CENPA, CENPC, CENPH, CENPM, CENPN, CENPT and CENPU. Post-translationally, phosphorylation at Ser-52 is essential for CENPE recruitment to kinetochores and orderly chromosome congression.

The protein resides in the nucleus. The protein localises to the chromosome. It localises to the centromere. Its function is as follows. Component of the CENPA-CAD (nucleosome distal) complex, a complex recruited to centromeres which is involved in assembly of kinetochore proteins, mitotic progression and chromosome segregation. May be involved in incorporation of newly synthesized CENPA into centromeres via its interaction with the CENPA-NAC complex. Plays an important role in chromosome congression and in the recruitment of CENP-O complex (which comprises CENPO, CENPP, CENPQ and CENPU), CENPE and PLK1 to the kinetochores. The protein is Centromere protein Q (Cenpq) of Rattus norvegicus (Rat).